A 250-amino-acid polypeptide reads, in one-letter code: Flavin-dependent thymidylate synthase (250 aa).

Residues 7-233 (LRVQLIAKTE…PAVFADFEVT (227 aa)) enclose the ThyX domain. DUMP is bound by residues 92 to 95 (ELIR), 103 to 107 (QLSQR), and arginine 172. FAD-binding positions include 95 to 97 (RHR) and glutamine 103. Residues 95–105 (RHRHFSYSQLS) carry the ThyX motif motif. FAD contacts are provided by residues 188–190 (NYR) and histidine 194. Arginine 199 is a dUMP binding site. The active-site Involved in ionization of N3 of dUMP, leading to its activation is the arginine 199.

This sequence belongs to the thymidylate synthase ThyX family. As to quaternary structure, homotetramer. It depends on FAD as a cofactor.

It catalyses the reaction dUMP + (6R)-5,10-methylene-5,6,7,8-tetrahydrofolate + NADPH + H(+) = dTMP + (6S)-5,6,7,8-tetrahydrofolate + NADP(+). It participates in pyrimidine metabolism; dTTP biosynthesis. Functionally, catalyzes the reductive methylation of 2'-deoxyuridine-5'-monophosphate (dUMP) to 2'-deoxythymidine-5'-monophosphate (dTMP) while utilizing 5,10-methylenetetrahydrofolate (mTHF) as the methyl donor, and NADPH and FADH(2) as the reductant. The sequence is that of Flavin-dependent thymidylate synthase from Mycobacterium marinum (strain ATCC BAA-535 / M).